A 148-amino-acid chain; its full sequence is Deoxyuridine 5'-triphosphate nucleotidohydrolase (148 aa).

Residues 65-67 (RSG), Asn78, 82-84 (TID), and Lys92 each bind substrate.

The protein belongs to the dUTPase family. The cofactor is Mg(2+).

The enzyme catalyses dUTP + H2O = dUMP + diphosphate + H(+). It functions in the pathway pyrimidine metabolism; dUMP biosynthesis; dUMP from dCTP (dUTP route): step 2/2. Functionally, this enzyme is involved in nucleotide metabolism: it produces dUMP, the immediate precursor of thymidine nucleotides and it decreases the intracellular concentration of dUTP so that uracil cannot be incorporated into DNA. The chain is Deoxyuridine 5'-triphosphate nucleotidohydrolase from Chlorobium phaeovibrioides (strain DSM 265 / 1930) (Prosthecochloris vibrioformis (strain DSM 265)).